A 120-amino-acid chain; its full sequence is Large ribosomal subunit protein bL17 (120 aa).

Belongs to the bacterial ribosomal protein bL17 family. Part of the 50S ribosomal subunit. Contacts protein L32.

The polypeptide is Large ribosomal subunit protein bL17 (Bacillus velezensis (strain DSM 23117 / BGSC 10A6 / LMG 26770 / FZB42) (Bacillus amyloliquefaciens subsp. plantarum)).